The following is a 154-amino-acid chain: Ribosome maturation factor RimP (154 aa).

It belongs to the RimP family.

The protein resides in the cytoplasm. In terms of biological role, required for maturation of 30S ribosomal subunits. The chain is Ribosome maturation factor RimP from Alkaliphilus oremlandii (strain OhILAs) (Clostridium oremlandii (strain OhILAs)).